We begin with the raw amino-acid sequence, 68 residues long: Large ribosomal subunit protein uL29 (68 aa).

The protein belongs to the universal ribosomal protein uL29 family.

In Finegoldia magna (strain ATCC 29328 / DSM 20472 / WAL 2508) (Peptostreptococcus magnus), this protein is Large ribosomal subunit protein uL29.